Consider the following 170-residue polypeptide: Acetyl-CoA decarbonylase/synthase complex subunit epsilon 2 (170 aa).

It belongs to the CdhB family. As to quaternary structure, heterotetramer of two alpha and two epsilon subunits. The ACDS complex is made up of alpha, epsilon, beta, gamma and delta subunits with a probable stoichiometry of (alpha(2)epsilon(2))(4)-beta(8)-(gamma(1)delta(1))(8).

It participates in one-carbon metabolism; methanogenesis from acetate. In terms of biological role, part of a complex that catalyzes the reversible cleavage of acetyl-CoA, allowing growth on acetate as sole source of carbon and energy. The alpha-epsilon subcomponent functions as a carbon monoxide dehydrogenase. The precise role of the epsilon subunit is unclear; it may have a stabilizing role within the alpha(2)epsilon(2) component and/or be involved in electron transfer to FAD during a potential FAD-mediated CO oxidation. The polypeptide is Acetyl-CoA decarbonylase/synthase complex subunit epsilon 2 (cdhB2) (Methanosarcina thermophila).